Here is a 324-residue protein sequence, read N- to C-terminus: Transcription factor TCP24 (324 aa).

One can recognise a TCP domain in the interval 50–108; the sequence is GKDRHSKVLTSKGLRDRRIRLSVATAIQFYDLQDRLGFDQPSKAVEWLINAASDSITDL. 2 disordered regions span residues 122–215 and 261–297; these read QNQT…PMNH and QRSS…NHQL. Residues 127–142 show a composition bias toward low complexity; the sequence is SACSSGTSESSLLSLS. Residues 144 to 162 enclose the R domain; it reads TEIRGKARERARERTAKDR. The span at 144 to 167 shows a compositional bias: basic and acidic residues; the sequence is TEIRGKARERARERTAKDRDKDLQ. 2 stretches are compositionally biased toward polar residues: residues 168–192 and 200–212; these read NAHS…NWTG and VQLQ…SQEP. Residues 261 to 281 are compositionally biased toward low complexity; the sequence is QRSSISSSSSSSSPMDSQSIS.

As to quaternary structure, forms a heterodimeric complex with ABAP1. Interacts with SPL. As to expression, expressed in cotyledons, particularly in the vascular region, in leaves, roots, stems, buds, flowers and siliques.

The protein localises to the nucleus. Functionally, plays a pivotal role in the control of morphogenesis of shoot organs by negatively regulating the expression of boundary-specific genes such as CUC genes, probably through the induction of miRNA (e.g. miR164). In association with ABAP1, exerts a negative role in cell proliferation in leaves, possibly by inhibiting mitotic DNA replication. Participates in ovule development. This is Transcription factor TCP24 (TCP24) from Arabidopsis thaliana (Mouse-ear cress).